The sequence spans 350 residues: Probable aldo-keto reductase 1 (350 aa).

The Proton donor role is filled by tyrosine 67. Residue histidine 135 coordinates substrate. 214–224 (SPLGKGFFSSG) lines the NADP(+) pocket.

The protein belongs to the aldo/keto reductase family.

The sequence is that of Probable aldo-keto reductase 1 from Oryza sativa subsp. indica (Rice).